A 371-amino-acid polypeptide reads, in one-letter code: Bifunctional enzyme IspD/IspF (371 aa).

The segment at 1–210 is 2-C-methyl-D-erythritol 4-phosphate cytidylyltransferase; it reads MSEMSLIMLA…LNLPTPSFEI (210 aa). The interval 211–371 is 2-C-methyl-D-erythritol 2,4-cyclodiphosphate synthase; it reads FTGNGFDVHE…NLKYFDWTRL (161 aa). Asp217 and His219 together coordinate a divalent metal cation. 4-CDP-2-C-methyl-D-erythritol 2-phosphate is bound by residues 217–219 and 243–244; these read DVH and HS. Residue His251 participates in a divalent metal cation binding. 4-CDP-2-C-methyl-D-erythritol 2-phosphate contacts are provided by residues 265–267, 270–274, 341–344, Phe348, and Arg351; these read DIG, YPDTD, and TTTE.

It in the N-terminal section; belongs to the IspD/TarI cytidylyltransferase family. IspD subfamily. In the C-terminal section; belongs to the IspF family. The cofactor is a divalent metal cation.

It carries out the reaction 2-C-methyl-D-erythritol 4-phosphate + CTP + H(+) = 4-CDP-2-C-methyl-D-erythritol + diphosphate. The enzyme catalyses 4-CDP-2-C-methyl-D-erythritol 2-phosphate = 2-C-methyl-D-erythritol 2,4-cyclic diphosphate + CMP. It functions in the pathway isoprenoid biosynthesis; isopentenyl diphosphate biosynthesis via DXP pathway; isopentenyl diphosphate from 1-deoxy-D-xylulose 5-phosphate: step 2/6. It participates in isoprenoid biosynthesis; isopentenyl diphosphate biosynthesis via DXP pathway; isopentenyl diphosphate from 1-deoxy-D-xylulose 5-phosphate: step 4/6. Its function is as follows. Bifunctional enzyme that catalyzes the formation of 4-diphosphocytidyl-2-C-methyl-D-erythritol from CTP and 2-C-methyl-D-erythritol 4-phosphate (MEP) (IspD), and catalyzes the conversion of 4-diphosphocytidyl-2-C-methyl-D-erythritol 2-phosphate (CDP-ME2P) to 2-C-methyl-D-erythritol 2,4-cyclodiphosphate (ME-CPP) with a corresponding release of cytidine 5-monophosphate (CMP) (IspF). The chain is Bifunctional enzyme IspD/IspF from Campylobacter jejuni (strain RM1221).